Reading from the N-terminus, the 323-residue chain is Aspartate carbamoyltransferase catalytic subunit (323 aa).

Residues Arg55 and Thr56 each contribute to the carbamoyl phosphate site. Residue Lys83 participates in L-aspartate binding. Carbamoyl phosphate-binding residues include Arg105, His138, and Gln141. Residues Arg181 and Arg235 each contribute to the L-aspartate site. Residues Gly276 and Pro277 each contribute to the carbamoyl phosphate site.

This sequence belongs to the aspartate/ornithine carbamoyltransferase superfamily. ATCase family. As to quaternary structure, heterododecamer (2C3:3R2) of six catalytic PyrB chains organized as two trimers (C3), and six regulatory PyrI chains organized as three dimers (R2).

It carries out the reaction carbamoyl phosphate + L-aspartate = N-carbamoyl-L-aspartate + phosphate + H(+). Its pathway is pyrimidine metabolism; UMP biosynthesis via de novo pathway; (S)-dihydroorotate from bicarbonate: step 2/3. In terms of biological role, catalyzes the condensation of carbamoyl phosphate and aspartate to form carbamoyl aspartate and inorganic phosphate, the committed step in the de novo pyrimidine nucleotide biosynthesis pathway. The sequence is that of Aspartate carbamoyltransferase catalytic subunit from Corynebacterium aurimucosum (strain ATCC 700975 / DSM 44827 / CIP 107346 / CN-1) (Corynebacterium nigricans).